The chain runs to 208 residues: High frequency lysogenization protein HflD homolog (208 aa).

The protein belongs to the HflD family.

Its subcellular location is the cytoplasm. The protein resides in the cell inner membrane. This Pseudomonas putida (strain ATCC 700007 / DSM 6899 / JCM 31910 / BCRC 17059 / LMG 24140 / F1) protein is High frequency lysogenization protein HflD homolog.